A 612-amino-acid polypeptide reads, in one-letter code: T-cell immunomodulatory protein (612 aa).

An N-terminal signal peptide occupies residues 1-33 (MAAAGRLPSSWALFSPLLAGLALLGVGPVPARA). N-linked (GlcNAc...) asparagine glycans are attached at residues Asn-36, Asn-95, Asn-139, Asn-146, Asn-151, Asn-176, Asn-188, Asn-226, and Asn-243. The stretch at 258–293 (VVGQSAFADFDGDGHMDHLLPGCEDKNCQKSTIYLV) is one FG-GAP; atypical repeat. 3 N-linked (GlcNAc...) asparagine glycosylation sites follow: Asn-353, Asn-371, and Asn-482. The chain crosses the membrane as a helical span at residues 567-587 (VLLTAIALIGVCVFILAIIGI).

The protein belongs to the TIP family. As to quaternary structure, interacts with RUVBL1, RUVBL2 and alpha-tubulin. Ubiquitously expressed.

The protein resides in the secreted. It is found in the membrane. Its function is as follows. Modulator of T-cell function. Has a protective effect in graft versus host disease model. In Homo sapiens (Human), this protein is T-cell immunomodulatory protein.